Reading from the N-terminus, the 249-residue chain is Phosphate import ATP-binding protein PstB (249 aa).

The 241-residue stretch at 4-244 folds into the ABC transporter domain; sequence IQTKDLNLYY…PKDKRTEDYI (241 aa). Residue 36-43 participates in ATP binding; that stretch reads GPSGCGKS.

It belongs to the ABC transporter superfamily. Phosphate importer (TC 3.A.1.7) family. The complex is composed of two ATP-binding proteins (PstB), two transmembrane proteins (PstC and PstA) and a solute-binding protein (PstS).

Its subcellular location is the cell membrane. It carries out the reaction phosphate(out) + ATP + H2O = ADP + 2 phosphate(in) + H(+). Its function is as follows. Part of the ABC transporter complex PstSACB involved in phosphate import. Responsible for energy coupling to the transport system. The polypeptide is Phosphate import ATP-binding protein PstB (Clostridium acetobutylicum (strain ATCC 824 / DSM 792 / JCM 1419 / IAM 19013 / LMG 5710 / NBRC 13948 / NRRL B-527 / VKM B-1787 / 2291 / W)).